The following is a 382-amino-acid chain: Queuine tRNA-ribosyltransferase (382 aa).

The Proton acceptor role is filled by aspartate 96. Substrate is bound by residues 96–100, aspartate 151, glutamine 194, and glycine 221; that span reads DSGGF. The interval 252 to 258 is RNA binding; the sequence is GVGAPDS. Aspartate 271 serves as the catalytic Nucleophile. Residues 276–280 form an RNA binding; important for wobble base 34 recognition region; it reads TRIAR. Zn(2+)-binding residues include cysteine 309, cysteine 311, cysteine 314, and histidine 340.

Belongs to the queuine tRNA-ribosyltransferase family. In terms of assembly, homodimer. Within each dimer, one monomer is responsible for RNA recognition and catalysis, while the other monomer binds to the replacement base PreQ1. The cofactor is Zn(2+).

It catalyses the reaction 7-aminomethyl-7-carbaguanine + guanosine(34) in tRNA = 7-aminomethyl-7-carbaguanosine(34) in tRNA + guanine. Its pathway is tRNA modification; tRNA-queuosine biosynthesis. Catalyzes the base-exchange of a guanine (G) residue with the queuine precursor 7-aminomethyl-7-deazaguanine (PreQ1) at position 34 (anticodon wobble position) in tRNAs with GU(N) anticodons (tRNA-Asp, -Asn, -His and -Tyr). Catalysis occurs through a double-displacement mechanism. The nucleophile active site attacks the C1' of nucleotide 34 to detach the guanine base from the RNA, forming a covalent enzyme-RNA intermediate. The proton acceptor active site deprotonates the incoming PreQ1, allowing a nucleophilic attack on the C1' of the ribose to form the product. After dissociation, two additional enzymatic reactions on the tRNA convert PreQ1 to queuine (Q), resulting in the hypermodified nucleoside queuosine (7-(((4,5-cis-dihydroxy-2-cyclopenten-1-yl)amino)methyl)-7-deazaguanosine). This chain is Queuine tRNA-ribosyltransferase, found in Lactococcus lactis subsp. cremoris (strain SK11).